Reading from the N-terminus, the 191-residue chain is dTTP/UTP pyrophosphatase (191 aa).

The Proton acceptor role is filled by Asp69.

The protein belongs to the Maf family. YhdE subfamily. Requires a divalent metal cation as cofactor.

It localises to the cytoplasm. It catalyses the reaction dTTP + H2O = dTMP + diphosphate + H(+). The enzyme catalyses UTP + H2O = UMP + diphosphate + H(+). Nucleoside triphosphate pyrophosphatase that hydrolyzes dTTP and UTP. May have a dual role in cell division arrest and in preventing the incorporation of modified nucleotides into cellular nucleic acids. The sequence is that of dTTP/UTP pyrophosphatase from Desulforamulus reducens (strain ATCC BAA-1160 / DSM 100696 / MI-1) (Desulfotomaculum reducens).